Reading from the N-terminus, the 465-residue chain is GTPase Der (465 aa).

2 consecutive EngA-type G domains span residues 3 to 166 and 184 to 358; these read FLVA…LNEY and IHFS…ACAN. GTP contacts are provided by residues 9-16, 56-60, 118-121, 190-197, 237-241, and 302-305; these read GRANVGKS, DTGGI, NKVD, GRPNVGKS, DTAGV, and NKWD. The 85-residue stretch at 359 to 443 folds into the KH-like domain; the sequence is KKITTADATR…PIVFEFKQSE (85 aa). The interval 446-465 is disordered; that stretch reads FADRKNKRSKDEGSKSKKVK.

The protein belongs to the TRAFAC class TrmE-Era-EngA-EngB-Septin-like GTPase superfamily. EngA (Der) GTPase family. In terms of assembly, associates with the 50S ribosomal subunit.

In terms of biological role, GTPase that plays an essential role in the late steps of ribosome biogenesis. In Francisella tularensis subsp. novicida (strain U112), this protein is GTPase Der.